Here is a 546-residue protein sequence, read N- to C-terminus: Chaperonin GroEL 1 (546 aa).

ATP-binding positions include 29–32 (TIGP), 86–90 (DGTTT), glycine 413, 477–479 (NAA), and aspartate 493. The segment at 523–546 (PAEPAPQDGHGHGHGHSHPQGPGF) is disordered.

It belongs to the chaperonin (HSP60) family. In terms of assembly, forms a cylinder of 14 subunits composed of two heptameric rings stacked back-to-back. Interacts with the co-chaperonin GroES.

It localises to the cytoplasm. It catalyses the reaction ATP + H2O + a folded polypeptide = ADP + phosphate + an unfolded polypeptide.. Its function is as follows. Together with its co-chaperonin GroES, plays an essential role in assisting protein folding. The GroEL-GroES system forms a nano-cage that allows encapsulation of the non-native substrate proteins and provides a physical environment optimized to promote and accelerate protein folding. The sequence is that of Chaperonin GroEL 1 from Frankia casuarinae (strain DSM 45818 / CECT 9043 / HFP020203 / CcI3).